The following is a 366-amino-acid chain: Pyrimidine monooxygenase RutA (366 aa).

Residues 49–50, asparagine 115, glutamate 124, 140–141, and serine 190 each bind FMN; these read IK and RY.

It belongs to the NtaA/SnaA/DszA monooxygenase family. RutA subfamily.

It catalyses the reaction uracil + FMNH2 + NADH + O2 = (Z)-3-ureidoacrylate + FMN + NAD(+) + H2O + H(+). The catalysed reaction is thymine + FMNH2 + NADH + O2 = (Z)-2-methylureidoacrylate + FMN + NAD(+) + H2O + H(+). Catalyzes the pyrimidine ring opening between N-3 and C-4 by an unusual flavin hydroperoxide-catalyzed mechanism, adding oxygen atoms in the process to yield ureidoacrylate peracid, that immediately reacts with FMN forming ureidoacrylate and FMN-N(5)-oxide. The FMN-N(5)-oxide reacts spontaneously with NADH to produce FMN. Requires the flavin reductase RutF to regenerate FMN in vivo. The polypeptide is Pyrimidine monooxygenase RutA (Serratia proteamaculans (strain 568)).